A 297-amino-acid polypeptide reads, in one-letter code: Homoserine kinase (297 aa).

82-92 is an ATP binding site; that stretch reads PVSRGLGSSAA.

The protein belongs to the GHMP kinase family. Homoserine kinase subfamily.

The protein resides in the cytoplasm. The catalysed reaction is L-homoserine + ATP = O-phospho-L-homoserine + ADP + H(+). Its pathway is amino-acid biosynthesis; L-threonine biosynthesis; L-threonine from L-aspartate: step 4/5. In terms of biological role, catalyzes the ATP-dependent phosphorylation of L-homoserine to L-homoserine phosphate. The sequence is that of Homoserine kinase from Clostridium botulinum (strain Loch Maree / Type A3).